A 216-amino-acid chain; its full sequence is Pyrophosphatase PpaX (216 aa).

The active-site Nucleophile is Asp9.

This sequence belongs to the HAD-like hydrolase superfamily. PpaX family. Mg(2+) is required as a cofactor.

The catalysed reaction is diphosphate + H2O = 2 phosphate + H(+). Hydrolyzes pyrophosphate formed during P-Ser-HPr dephosphorylation by HPrK/P. Might play a role in controlling the intracellular pyrophosphate pool. The chain is Pyrophosphatase PpaX from Bacillus cereus (strain ATCC 10987 / NRS 248).